The sequence spans 520 residues: Ribonuclease Y (520 aa).

A helical membrane pass occupies residues 1–21 (MDIITIIIAVIAGIGGGFGIS). The KH domain maps to 210–276 (CVSVFNIESD…RLALHKLVTD (67 aa)). The HD domain maps to 336–429 (LLQHSREVSK…VQVCDAISGA (94 aa)).

Belongs to the RNase Y family.

The protein resides in the cell membrane. Its function is as follows. Endoribonuclease that initiates mRNA decay. In Flavobacterium psychrophilum (strain ATCC 49511 / DSM 21280 / CIP 103535 / JIP02/86), this protein is Ribonuclease Y.